Here is a 206-residue protein sequence, read N- to C-terminus: Dephospho-CoA kinase (206 aa).

The region spanning 4-200 is the DPCK domain; sequence IVALTGGIGS…HRYLKLATAA (197 aa). 12–17 is a binding site for ATP; it reads GSGKST.

This sequence belongs to the CoaE family.

It localises to the cytoplasm. The catalysed reaction is 3'-dephospho-CoA + ATP = ADP + CoA + H(+). It functions in the pathway cofactor biosynthesis; coenzyme A biosynthesis; CoA from (R)-pantothenate: step 5/5. Functionally, catalyzes the phosphorylation of the 3'-hydroxyl group of dephosphocoenzyme A to form coenzyme A. The polypeptide is Dephospho-CoA kinase (Yersinia pestis).